The following is a 683-amino-acid chain: Eukaryotic translation initiation factor 3 subunit B (683 aa).

A disordered region spans residues 1 to 25; the sequence is MAKKKGEEQDFEEEPNFDDPEGFVD. Acidic residues predominate over residues 9-25; that stretch reads QDFEEEPNFDDPEGFVD. The RRM domain maps to 49–133; sequence NVIVVDNIPV…YTLLVNRFAD (85 aa). WD repeat units follow at residues 199–238, 240–279, 283–321, 324–359, 435–477, and 522–567; these read KRER…KVNK, AHSN…EKRT, DGMS…LLDM, IRVE…TLMA, EVKE…EPVL, and GDHY…KRVN. Residues 611–638 adopt a coiled-coil conformation; the sequence is MTRASKELIEKRAKLREQFTEYRSKRVK.

The protein belongs to the eIF-3 subunit B family. In terms of assembly, component of the eukaryotic translation initiation factor 3 (eIF-3) complex.

It is found in the cytoplasm. Its function is as follows. RNA-binding component of the eukaryotic translation initiation factor 3 (eIF-3) complex, which is involved in protein synthesis of a specialized repertoire of mRNAs and, together with other initiation factors, stimulates binding of mRNA and methionyl-tRNAi to the 40S ribosome. The eIF-3 complex specifically targets and initiates translation of a subset of mRNAs involved in cell proliferation. The sequence is that of Eukaryotic translation initiation factor 3 subunit B from Anopheles gambiae (African malaria mosquito).